Consider the following 206-residue polypeptide: Small ribosomal subunit protein uS4 (206 aa).

In terms of domain architecture, S4 RNA-binding spans serine 96–asparagine 157.

Belongs to the universal ribosomal protein uS4 family. As to quaternary structure, part of the 30S ribosomal subunit. Contacts protein S5. The interaction surface between S4 and S5 is involved in control of translational fidelity.

In terms of biological role, one of the primary rRNA binding proteins, it binds directly to 16S rRNA where it nucleates assembly of the body of the 30S subunit. With S5 and S12 plays an important role in translational accuracy. The protein is Small ribosomal subunit protein uS4 of Chromohalobacter salexigens (strain ATCC BAA-138 / DSM 3043 / CIP 106854 / NCIMB 13768 / 1H11).